Consider the following 796-residue polypeptide: Lon protease 2 (796 aa).

In terms of domain architecture, Lon N-terminal spans 9–206 (LPIVILKENV…KLIVNLSIEI (198 aa)). 352-359 (GPPGIGKT) is an ATP binding site. Residues 617 to 796 (IDSSGFVYGL…EEVFDYLNII (180 aa)) form the Lon proteolytic domain. Residues Ser702 and Lys745 contribute to the active site.

This sequence belongs to the peptidase S16 family. As to quaternary structure, homohexamer. Organized in a ring with a central cavity.

The protein resides in the cytoplasm. The catalysed reaction is Hydrolysis of proteins in presence of ATP.. In terms of biological role, ATP-dependent serine protease that mediates the selective degradation of mutant and abnormal proteins as well as certain short-lived regulatory proteins. Required for cellular homeostasis and for survival from DNA damage and developmental changes induced by stress. Degrades polypeptides processively to yield small peptide fragments that are 5 to 10 amino acids long. Binds to DNA in a double-stranded, site-specific manner. This Borreliella burgdorferi (strain ATCC 35210 / DSM 4680 / CIP 102532 / B31) (Borrelia burgdorferi) protein is Lon protease 2 (lon2).